We begin with the raw amino-acid sequence, 283 residues long: ATP phosphoribosyltransferase (283 aa).

This sequence belongs to the ATP phosphoribosyltransferase family. Long subfamily. Mg(2+) is required as a cofactor.

It is found in the cytoplasm. The catalysed reaction is 1-(5-phospho-beta-D-ribosyl)-ATP + diphosphate = 5-phospho-alpha-D-ribose 1-diphosphate + ATP. Its pathway is amino-acid biosynthesis; L-histidine biosynthesis; L-histidine from 5-phospho-alpha-D-ribose 1-diphosphate: step 1/9. With respect to regulation, feedback inhibited by histidine. Catalyzes the condensation of ATP and 5-phosphoribose 1-diphosphate to form N'-(5'-phosphoribosyl)-ATP (PR-ATP). Has a crucial role in the pathway because the rate of histidine biosynthesis seems to be controlled primarily by regulation of HisG enzymatic activity. The chain is ATP phosphoribosyltransferase from Bifidobacterium longum (strain DJO10A).